The chain runs to 369 residues: 4-hydroxy-3-methylbut-2-en-1-yl diphosphate synthase (flavodoxin) (369 aa).

The [4Fe-4S] cluster site is built by cysteine 270, cysteine 273, cysteine 305, and glutamate 312.

The protein belongs to the IspG family. The cofactor is [4Fe-4S] cluster.

It carries out the reaction (2E)-4-hydroxy-3-methylbut-2-enyl diphosphate + oxidized [flavodoxin] + H2O + 2 H(+) = 2-C-methyl-D-erythritol 2,4-cyclic diphosphate + reduced [flavodoxin]. It functions in the pathway isoprenoid biosynthesis; isopentenyl diphosphate biosynthesis via DXP pathway; isopentenyl diphosphate from 1-deoxy-D-xylulose 5-phosphate: step 5/6. Its function is as follows. Converts 2C-methyl-D-erythritol 2,4-cyclodiphosphate (ME-2,4cPP) into 1-hydroxy-2-methyl-2-(E)-butenyl 4-diphosphate. This Pseudomonas syringae pv. tomato (strain ATCC BAA-871 / DC3000) protein is 4-hydroxy-3-methylbut-2-en-1-yl diphosphate synthase (flavodoxin).